The sequence spans 256 residues: DNA repair protein RecO (256 aa).

This sequence belongs to the RecO family.

Its function is as follows. Involved in DNA repair and RecF pathway recombination. The sequence is that of DNA repair protein RecO from Pelotomaculum thermopropionicum (strain DSM 13744 / JCM 10971 / SI).